A 312-amino-acid chain; its full sequence is Malate dehydrogenase (312 aa).

Residues 7 to 13 (GASGGIG) and Asp-34 contribute to the NAD(+) site. Arg-81 and Arg-87 together coordinate substrate. Residues Asn-94 and 117–119 (ITN) contribute to the NAD(+) site. Substrate contacts are provided by Asn-119 and Arg-153. His-177 acts as the Proton acceptor in catalysis. Met-227 is an NAD(+) binding site.

This sequence belongs to the LDH/MDH superfamily. MDH type 1 family. Homodimer.

The enzyme catalyses (S)-malate + NAD(+) = oxaloacetate + NADH + H(+). Functionally, catalyzes the reversible oxidation of malate to oxaloacetate. In Actinobacillus succinogenes (strain ATCC 55618 / DSM 22257 / CCUG 43843 / 130Z), this protein is Malate dehydrogenase.